Consider the following 374-residue polypeptide: Tetraacyldisaccharide 4'-kinase (374 aa).

43–50 (TMGGTGKT) lines the ATP pocket.

Belongs to the LpxK family.

It catalyses the reaction a lipid A disaccharide + ATP = a lipid IVA + ADP + H(+). It functions in the pathway glycolipid biosynthesis; lipid IV(A) biosynthesis; lipid IV(A) from (3R)-3-hydroxytetradecanoyl-[acyl-carrier-protein] and UDP-N-acetyl-alpha-D-glucosamine: step 6/6. In terms of biological role, transfers the gamma-phosphate of ATP to the 4'-position of a tetraacyldisaccharide 1-phosphate intermediate (termed DS-1-P) to form tetraacyldisaccharide 1,4'-bis-phosphate (lipid IVA). In Leptospira biflexa serovar Patoc (strain Patoc 1 / Ames), this protein is Tetraacyldisaccharide 4'-kinase.